The following is a 352-amino-acid chain: Hematopoietic SH2 domain-containing protein (352 aa).

The region spanning 34–125 is the SH2 domain; the sequence is WFHGAISRED…PRRELLTQPC (92 aa). Disordered stretches follow at residues 157–199 and 241–352; these read EEAS…LGET and VISG…PGYC. Residues 180–191 show a composition bias toward polar residues; sequence RITTKEATSSCP. Over residues 283 to 295 the composition is skewed to basic and acidic residues; sequence PKDRKVPTRKAER. Residues 343-352 are compositionally biased toward pro residues; it reads QPPPFAPGYC.

As to quaternary structure, interacts with FES and TNK2. In terms of processing, may be phosphorylated by FES and ACK1. In terms of tissue distribution, predominantly expressed in spleen and hematopoietic cells such as peripheral blood leukocytes and weakly expressed in prostate, thymus, heart, small intestine and placenta.

It localises to the cytoplasm. Its subcellular location is the nucleus. Its function is as follows. May be a modulator of the apoptotic response through its ability to affect mitochondrial stability. Adapter protein involved in tyrosine kinase and CD28 signaling. Seems to affect CD28-mediated activation of the RE/AP element of the interleukin-2 promoter. The chain is Hematopoietic SH2 domain-containing protein (HSH2D) from Homo sapiens (Human).